Consider the following 296-residue polypeptide: Ribosomal RNA small subunit methyltransferase H (296 aa).

Residues 41-43, aspartate 59, phenylalanine 86, aspartate 104, and glutamine 111 each bind S-adenosyl-L-methionine; that span reads GGY.

The protein belongs to the methyltransferase superfamily. RsmH family.

It localises to the cytoplasm. It carries out the reaction cytidine(1402) in 16S rRNA + S-adenosyl-L-methionine = N(4)-methylcytidine(1402) in 16S rRNA + S-adenosyl-L-homocysteine + H(+). In terms of biological role, specifically methylates the N4 position of cytidine in position 1402 (C1402) of 16S rRNA. The protein is Ribosomal RNA small subunit methyltransferase H of Neorickettsia sennetsu (strain ATCC VR-367 / Miyayama) (Ehrlichia sennetsu).